We begin with the raw amino-acid sequence, 248 residues long: 5'-nucleotidase SurE (248 aa).

A divalent metal cation is bound by residues D8, D9, S39, and N91.

This sequence belongs to the SurE nucleotidase family. It depends on a divalent metal cation as a cofactor.

The protein localises to the cytoplasm. The catalysed reaction is a ribonucleoside 5'-phosphate + H2O = a ribonucleoside + phosphate. Nucleotidase that shows phosphatase activity on nucleoside 5'-monophosphates. In Neisseria gonorrhoeae (strain ATCC 700825 / FA 1090), this protein is 5'-nucleotidase SurE.